Consider the following 443-residue polypeptide: D(2) dopamine receptor (443 aa).

Topologically, residues 1–37 are extracellular; it reads MDPLNLSWYDDDPESRNWSRPFNGSEGKVGKPHYNYY. N-linked (GlcNAc...) asparagine glycosylation is found at N5, N17, and N23. A helical membrane pass occupies residues 38–60; that stretch reads AMLLTLLIFVIVFGNVLVCMAVS. Residues 61-70 are Cytoplasmic-facing; the sequence is REKALQTTTN. A helical membrane pass occupies residues 71–93; sequence YLIVSLAVADLLVATLVMPWVVY. Over 94–108 the chain is Extracellular; that stretch reads LEVVGEWKFSRIHCD. C107 and C182 are disulfide-bonded. The helical transmembrane segment at 109-130 threads the bilayer; the sequence is IFVTLDVMMCTASILNLCAISI. Over 131–151 the chain is Cytoplasmic; sequence DRYTAVAMPMLYNTRYSSKRR. The helical transmembrane segment at 152–172 threads the bilayer; sequence VTVMIAIVWVLSFTISCPLLF. Over 173–188 the chain is Extracellular; that stretch reads GLNNTDQNECIIANPA. The chain crosses the membrane as a helical span at residues 189–213; that stretch reads FVVYSSVVSFYVPFIVTLLVYIKIY. The tract at residues 211–373 is interaction with PPP1R9B; that stretch reads KIYIVLRRRR…SQQKEKKATQ (163 aa). Residues 214 to 373 are Cytoplasmic-facing; the sequence is IVLRRRRKRV…SQQKEKKATQ (160 aa). The tract at residues 282–331 is disordered; sequence EMLSSTSPPERTRYSPIPPSHHQLTLPDPSHHGLHSTANSPVKPEKNGHA. A helical transmembrane segment spans residues 374-395; that stretch reads MLAIVLGVFIICWLPFFITHIL. Over 396 to 409 the chain is Extracellular; that stretch reads NIHCDCNIPPVLYS. A disulfide bond links C399 and C401. Residues 410–431 traverse the membrane as a helical segment; that stretch reads AFTWLGYVNSAVNPIIYTTFNV. Topologically, residues 432–443 are cytoplasmic; sequence EFRKAFMKILHC. A lipid anchor (S-palmitoyl cysteine) is attached at C443.

This sequence belongs to the G-protein coupled receptor 1 family. In terms of assembly, forms homo- and heterooligomers with DRD4. The interaction with DRD4 may modulate agonist-induced downstream signaling. Interacts with CADPS and CADPS2. Interacts with GPRASP1, PPP1R9B and CLIC6. Interacts with ARRB2. Interacts with HTR2A. Interacts with DRD1. Interacts with KCNA2. Post-translationally, palmitoylated. Palmitoylation which is required for proper localization to the plasma membrane and stability of the receptor could be carried on by ZDHHC4, ZDHHC3 and ZDHHC8.

It is found in the cell membrane. The protein resides in the golgi apparatus membrane. Its function is as follows. Dopamine receptor whose activity is mediated by G proteins which inhibit adenylyl cyclase. Positively regulates postnatal regression of retinal hyaloid vessels via suppression of VEGFR2/KDR activity, downstream of OPN5. This chain is D(2) dopamine receptor (DRD2), found in Mustela putorius furo (European domestic ferret).